Here is a 182-residue protein sequence, read N- to C-terminus: Urease accessory protein UreE (182 aa).

The segment at 128 to 182 is disordered; it reads PRTEPFRPEGGAYGHGRTLGHDHGPAQGHGHDHPHVHVHISHKPDEDETPDADPA. Residues 146-162 are compositionally biased toward basic and acidic residues; sequence LGHDHGPAQGHGHDHPH. The span at 173 to 182 shows a compositional bias: acidic residues; it reads EDETPDADPA.

This sequence belongs to the UreE family.

It localises to the cytoplasm. Involved in urease metallocenter assembly. Binds nickel. Probably functions as a nickel donor during metallocenter assembly. The sequence is that of Urease accessory protein UreE from Cereibacter sphaeroides (strain ATCC 17023 / DSM 158 / JCM 6121 / CCUG 31486 / LMG 2827 / NBRC 12203 / NCIMB 8253 / ATH 2.4.1.) (Rhodobacter sphaeroides).